The chain runs to 66 residues: Beta-defensin 107A (66 aa).

The N-terminal stretch at Met1–Thr22 is a signal peptide. 2 disulfides stabilise this stretch: Cys37–Cys51 and Cys41–Cys60.

Belongs to the beta-defensin family.

The protein localises to the secreted. Functionally, has antibacterial activity. The protein is Beta-defensin 107A (DEFB107A) of Gorilla gorilla gorilla (Western lowland gorilla).